Consider the following 367-residue polypeptide: Isocitrate dehydrogenase [NAD] regulatory subunit 2, mitochondrial (367 aa).

A mitochondrion-targeting transit peptide spans 1–25; the sequence is MSRQSFSLLKNLRSIASGSKIQTRS.

The protein belongs to the isocitrate and isopropylmalate dehydrogenases family. Heterooligomer of catalytic and regulatory subunits. In terms of tissue distribution, ubiquitous. Predominantly expressed in roots, stems and leaves.

It is found in the mitochondrion. In terms of biological role, performs an essential role in the oxidative function of the citric acid cycle. The sequence is that of Isocitrate dehydrogenase [NAD] regulatory subunit 2, mitochondrial (IDH2) from Arabidopsis thaliana (Mouse-ear cress).